Consider the following 293-residue polypeptide: Pyridoxal 5'-phosphate synthase subunit PdxS (293 aa).

Asp25 is a D-ribose 5-phosphate binding site. Catalysis depends on Lys82, which acts as the Schiff-base intermediate with D-ribose 5-phosphate. Position 103 (Asp103) interacts with D-ribulose 5-phosphate. Gly154 contributes to the D-ribose 5-phosphate binding site. Arg166 provides a ligand contact to D-glyceraldehyde 3-phosphate. Residues Gly215 and 236-237 contribute to the D-ribose 5-phosphate site; that span reads GS.

Belongs to the PdxS/SNZ family. Homohexamer and homododecamer. In the presence of PdxT, forms a dodecamer of heterodimers.

It catalyses the reaction aldehydo-D-ribose 5-phosphate + D-glyceraldehyde 3-phosphate + L-glutamine = pyridoxal 5'-phosphate + L-glutamate + phosphate + 3 H2O + H(+). The protein operates within cofactor biosynthesis; pyridoxal 5'-phosphate biosynthesis. In terms of biological role, catalyzes the formation of pyridoxal 5'-phosphate from ribose 5-phosphate (RBP), glyceraldehyde 3-phosphate (G3P) and ammonia. The ammonia is provided by the PdxT subunit. Can also use ribulose 5-phosphate and dihydroxyacetone phosphate as substrates, resulting from enzyme-catalyzed isomerization of RBP and G3P, respectively. This Thermotoga maritima (strain ATCC 43589 / DSM 3109 / JCM 10099 / NBRC 100826 / MSB8) protein is Pyridoxal 5'-phosphate synthase subunit PdxS.